A 258-amino-acid polypeptide reads, in one-letter code: MAAPAPGLISVFSSSQELGAALAQLVAQRAACCLAGARARFALGLSGGSLVSMLARELPAAVAPAGPASLARWTLGFCDERLVPFDHAESTYGLYRTHLLSRLPIPESQVITINPELPVEEAAEDYAKKLRQAFQGDSIPVFDLLILGVGPDGHTCSLFPDHPLLQEREKIVAPISDSPKPPPQRVTLTLPVLNAARTVIFVATGEGKAAVLKRILEDQEENPLPAALVQPHTGKLCWFLDEAAARLLTVPFEKHSTL.

Ala2 carries the post-translational modification N-acetylalanine. A Phosphoserine modification is found at Ser49. Lys180 carries the N6-acetyllysine modification.

This sequence belongs to the glucosamine/galactosamine-6-phosphate isomerase family. 6-phosphogluconolactonase subfamily.

Its subcellular location is the cytoplasm. It carries out the reaction 6-phospho-D-glucono-1,5-lactone + H2O = 6-phospho-D-gluconate + H(+). Its pathway is carbohydrate degradation; pentose phosphate pathway; D-ribulose 5-phosphate from D-glucose 6-phosphate (oxidative stage): step 2/3. Hydrolysis of 6-phosphogluconolactone to 6-phosphogluconate. This Homo sapiens (Human) protein is 6-phosphogluconolactonase.